A 137-amino-acid chain; its full sequence is U6 snRNA-associated Sm-like protein LSm4 (137 aa).

Met1 is subject to N-acetylmethionine. In terms of domain architecture, Sm spans 2–75 (LPLSLLKTAQ…IKYLRIPDEI (74 aa)). The segment at 82–137 (EAAKGRGRGGPQQKQQKGRGMGGAGRGVFGGRGRGGIPGAGRGQPEKKPGRQAGKQ) is disordered. The span at 100-123 (RGMGGAGRGVFGGRGRGGIPGAGR) shows a compositional bias: gly residues.

It belongs to the snRNP Sm proteins family. Component of the precatalytic spliceosome (spliceosome B complex). Component of the U4/U6-U5 tri-snRNP complex, a building block of the precatalytic spliceosome (spliceosome B complex). The U4/U6-U5 tri-snRNP complex is composed of the U4, U6 and U5 snRNAs and at least PRPF3, PRPF4, PRPF6, PRPF8, PRPF31, SNRNP200, TXNL4A, SNRNP40, SNRPB, SNRPD1, SNRPD2, SNRPD3, SNRPE, SNRPF, SNRPG, DDX23, CD2BP2, PPIH, SNU13, EFTUD2, SART1 and USP39, plus LSM2, LSM3, LSM4, LSM5, LSM6, LSM7 and LSM8. LSM2, LSM3, LSM4, LSM5, LSM6, LSM7 and LSM8 form a heptameric, ring-shaped subcomplex (the LSM2-8 complex) that is part of the U4/U6-U5 tri-snRNP complex and the precatalytic spliceosome. As to expression, ubiquitous.

Its subcellular location is the nucleus. Functionally, plays a role in pre-mRNA splicing as component of the U4/U6-U5 tri-snRNP complex that is involved in spliceosome assembly, and as component of the precatalytic spliceosome (spliceosome B complex). The heptameric LSM2-8 complex binds specifically to the 3'-terminal U-tract of U6 snRNA. This is U6 snRNA-associated Sm-like protein LSm4 (Lsm4) from Mus musculus (Mouse).